A 147-amino-acid polypeptide reads, in one-letter code: Small ribosomal subunit protein eS19 (147 aa).

Belongs to the eukaryotic ribosomal protein eS19 family. In terms of assembly, part of the 30S ribosomal subunit.

In terms of biological role, may be involved in maturation of the 30S ribosomal subunit. The sequence is that of Small ribosomal subunit protein eS19 from Archaeoglobus fulgidus (strain ATCC 49558 / DSM 4304 / JCM 9628 / NBRC 100126 / VC-16).